Consider the following 529-residue polypeptide: Probable bifunctional tRNA threonylcarbamoyladenosine biosynthesis protein (529 aa).

Positions 1-324 (MIVLGLEGTA…FRIDEVDAPW (324 aa)) are kae1. Residues histidine 107, histidine 111, and tyrosine 128 each contribute to the Fe cation site. L-threonylcarbamoyladenylate is bound by residues 128–132 (YVSGG), aspartate 160, glycine 173, glutamate 177, and asparagine 257. Aspartate 285 contributes to the Fe cation binding site. The region spanning 329 to 529 (SRKDYGKAGA…SAIRRRHRYV (201 aa)) is the Protein kinase domain. ATP contacts are provided by residues 335 to 342 (KAGAESRI) and lysine 355. The Proton acceptor; for kinase activity role is filled by aspartate 447.

It in the N-terminal section; belongs to the KAE1 / TsaD family. In the C-terminal section; belongs to the protein kinase superfamily. Tyr protein kinase family. BUD32 subfamily. Component of the KEOPS complex that consists of Kae1, Bud32, Cgi121 and Pcc1; the whole complex dimerizes. Fe(2+) is required as a cofactor.

The protein resides in the cytoplasm. The enzyme catalyses L-seryl-[protein] + ATP = O-phospho-L-seryl-[protein] + ADP + H(+). It catalyses the reaction L-threonyl-[protein] + ATP = O-phospho-L-threonyl-[protein] + ADP + H(+). It carries out the reaction L-threonylcarbamoyladenylate + adenosine(37) in tRNA = N(6)-L-threonylcarbamoyladenosine(37) in tRNA + AMP + H(+). Its function is as follows. Required for the formation of a threonylcarbamoyl group on adenosine at position 37 (t(6)A37) in tRNAs that read codons beginning with adenine. Is a component of the KEOPS complex that is probably involved in the transfer of the threonylcarbamoyl moiety of threonylcarbamoyl-AMP (TC-AMP) to the N6 group of A37. The Kae1 domain likely plays a direct catalytic role in this reaction. The Bud32 domain probably displays kinase activity that regulates Kae1 function. This Thermoplasma acidophilum (strain ATCC 25905 / DSM 1728 / JCM 9062 / NBRC 15155 / AMRC-C165) protein is Probable bifunctional tRNA threonylcarbamoyladenosine biosynthesis protein.